The primary structure comprises 94 residues: Small ribosomal subunit protein uS19c (94 aa).

The protein belongs to the universal ribosomal protein uS19 family.

It is found in the plastid. The protein localises to the chloroplast. In terms of biological role, protein S19 forms a complex with S13 that binds strongly to the 16S ribosomal RNA. This Euglena gracilis protein is Small ribosomal subunit protein uS19c (rps19).